A 353-amino-acid polypeptide reads, in one-letter code: Uroporphyrinogen decarboxylase (353 aa).

Substrate contacts are provided by residues 26–30 (RQAGR), Asp76, Tyr153, Thr208, and His326.

The protein belongs to the uroporphyrinogen decarboxylase family. Homodimer.

Its subcellular location is the cytoplasm. The enzyme catalyses uroporphyrinogen III + 4 H(+) = coproporphyrinogen III + 4 CO2. Its pathway is porphyrin-containing compound metabolism; protoporphyrin-IX biosynthesis; coproporphyrinogen-III from 5-aminolevulinate: step 4/4. In terms of biological role, catalyzes the decarboxylation of four acetate groups of uroporphyrinogen-III to yield coproporphyrinogen-III. In Chromohalobacter salexigens (strain ATCC BAA-138 / DSM 3043 / CIP 106854 / NCIMB 13768 / 1H11), this protein is Uroporphyrinogen decarboxylase.